The sequence spans 580 residues: Lysine--tRNA ligase (580 aa).

The 'HIGH' region signature appears at P43 to N51. The interval K178–S209 is disordered. Low complexity predominate over residues A196–S209. Positions K325–S329 match the 'KMSKS' region motif.

Belongs to the class-I aminoacyl-tRNA synthetase family.

The protein localises to the cytoplasm. The catalysed reaction is tRNA(Lys) + L-lysine + ATP = L-lysyl-tRNA(Lys) + AMP + diphosphate. The polypeptide is Lysine--tRNA ligase (lysS) (Streptomyces coelicolor (strain ATCC BAA-471 / A3(2) / M145)).